The chain runs to 378 residues: uncharacterized protein (378 aa).

Zn(2+) contacts are provided by C38, H60, C90, C93, C96, and C104.

It belongs to the zinc-containing alcohol dehydrogenase family. Class-III subfamily. The cofactor is Zn(2+).

This is an uncharacterized protein from Bacillus subtilis (strain 168).